Consider the following 1411-residue polypeptide: Protein three rows (1411 aa).

Residues 1065–1071 (VEPIRKQ) are separase cleavage-site. Disordered stretches follow at residues 1221-1240 (LEPP…NISP), 1268-1301 (VRPA…KSPK), and 1330-1411 (AKST…RHRN). Low complexity-rich tracts occupy residues 1270–1289 (PASS…NASS) and 1386–1398 (TAEQ…TATP).

As to quaternary structure, interacts with pim and Sse. Cleavage of thr contributes to inactivation of Sse.

Its subcellular location is the cytoplasm. Its function is as follows. Required specifically for chromosome disjunction during all mitoses; maternally provided protein is sufficient until mitosis 14 then zygotic protein is required. Involved in formation and/or maintenance of epithelial structures: bud extension during Malpighian tubule development, and foregut and hindgut morphogenesis. The chain is Protein three rows (thr) from Drosophila virilis (Fruit fly).